The sequence spans 80 residues: Photosystem II extrinsic protein V (80 aa).

M47 contributes to the heme binding site.

This sequence belongs to the cytochrome c family. PsbV subfamily. In terms of assembly, PSII is composed of 1 copy each of membrane proteins PsbA, PsbB, PsbC, PsbD, PsbE, PsbF, PsbH, PsbI, PsbJ, PsbK, PsbL, PsbM, PsbT, PsbY, PsbZ, Psb30/Ycf12, at least 3 peripheral proteins of the oxygen-evolving complex and a large number of cofactors. It forms dimeric complexes. Heme is required as a cofactor.

It is found in the plastid. The protein resides in the chloroplast thylakoid membrane. One of the extrinsic, lumenal subunits of photosystem II (PSII). PSII is a light-driven water plastoquinone oxidoreductase, using light energy to abstract electrons from H(2)O, generating a proton gradient subsequently used for ATP formation. The extrinsic proteins stabilize the structure of photosystem II oxygen-evolving complex (OEC), the ion environment of oxygen evolution and protect the OEC against heat-induced inactivation. The sequence is that of Photosystem II extrinsic protein V from Thalassiosira weissflogii (Marine diatom).